The chain runs to 231 residues: Endonuclease NucS (231 aa).

It belongs to the NucS endonuclease family.

The protein resides in the cytoplasm. Functionally, cleaves both 3' and 5' ssDNA extremities of branched DNA structures. This chain is Endonuclease NucS, found in Kocuria rhizophila (strain ATCC 9341 / DSM 348 / NBRC 103217 / DC2201).